The primary structure comprises 289 residues: MRILSSLILLIALAIALVSATRPVVLMHGVTTGKESMEPLKSWIEESIPDIYVLNVEIGNGAFDSIFTTMDSQIEEFAQVVQADPKLANGFNLIGFSQGTLIARAFVQRYNNPQVYNYISWNGPQGGQFGTPFVNIPWVDKVLGTIPYEKTIQKKLSVAEYWKDPHRIDKYLERSIFLADINNEYQVKNTTYKENLTKLNAMVLTYSTNDKTIIPKESGWFSFYADGSGTEVVPLQQQTQYSEDWLGLRTLDESNRLFFYTTTCTHRDHPIEDYCKPYFTNFTLPYLQN.

The signal sequence occupies residues 1–20 (MRILSSLILLIALAIALVSA). The active site involves S97. Residues N189 and N195 are each glycosylated (N-linked (GlcNAc...) asparagine). Catalysis depends on residues D210 and H266. An N-linked (GlcNAc...) asparagine glycan is attached at N281.

This sequence belongs to the palmitoyl-protein thioesterase family.

Its subcellular location is the lysosome. The catalysed reaction is S-hexadecanoyl-L-cysteinyl-[protein] + H2O = L-cysteinyl-[protein] + hexadecanoate + H(+). In terms of biological role, removes thioester-linked fatty acyl groups such as palmitate from modified cysteine residues in proteins or peptides during lysosomal degradation. The chain is Palmitoyl-protein thioesterase 3 (ppt3) from Dictyostelium discoideum (Social amoeba).